Here is a 191-residue protein sequence, read N- to C-terminus: Fe/S biogenesis protein NfuA (191 aa).

Positions 149 and 152 each coordinate [4Fe-4S] cluster.

Belongs to the NfuA family. Homodimer. It depends on [4Fe-4S] cluster as a cofactor.

Its function is as follows. Involved in iron-sulfur cluster biogenesis. Binds a 4Fe-4S cluster, can transfer this cluster to apoproteins, and thereby intervenes in the maturation of Fe/S proteins. Could also act as a scaffold/chaperone for damaged Fe/S proteins. In Serratia proteamaculans (strain 568), this protein is Fe/S biogenesis protein NfuA.